Reading from the N-terminus, the 300-residue chain is UDP-3-O-acyl-N-acetylglucosamine deacetylase (300 aa).

Residues His-76, His-235, and Asp-239 each coordinate Zn(2+). His-262 acts as the Proton donor in catalysis.

This sequence belongs to the LpxC family. Zn(2+) is required as a cofactor.

The enzyme catalyses a UDP-3-O-[(3R)-3-hydroxyacyl]-N-acetyl-alpha-D-glucosamine + H2O = a UDP-3-O-[(3R)-3-hydroxyacyl]-alpha-D-glucosamine + acetate. It participates in glycolipid biosynthesis; lipid IV(A) biosynthesis; lipid IV(A) from (3R)-3-hydroxytetradecanoyl-[acyl-carrier-protein] and UDP-N-acetyl-alpha-D-glucosamine: step 2/6. Functionally, catalyzes the hydrolysis of UDP-3-O-myristoyl-N-acetylglucosamine to form UDP-3-O-myristoylglucosamine and acetate, the committed step in lipid A biosynthesis. The polypeptide is UDP-3-O-acyl-N-acetylglucosamine deacetylase (Halorhodospira halophila (strain DSM 244 / SL1) (Ectothiorhodospira halophila (strain DSM 244 / SL1))).